Reading from the N-terminus, the 87-residue chain is MVKNSVISVIFQEEKKGSVEFQVFNFTNKIRRLTSHLELHKKDYLSQRGLKKILGKRQRLLAYLAKKNRVRYKELINQLDIRETKTH.

It belongs to the universal ribosomal protein uS15 family. Part of the 30S ribosomal subunit.

It localises to the plastid. Its subcellular location is the chloroplast. The chain is Small ribosomal subunit protein uS15c (rps15) from Solanum bulbocastanum (Wild potato).